The following is a 120-amino-acid chain: Putative monooxygenase GME11364 (120 aa).

The 91-residue stretch at 9–99 (VSVHIRLTVD…ILLKPHEVEL (91 aa)) folds into the ABM domain.

This sequence belongs to the LsrG family.

Its pathway is secondary metabolite biosynthesis. Its function is as follows. Putative monooxygenase; part of the gene cluster that mediates the biosynthesis of dibenzodioxocinones such as pestalotiollide B, a novel class of inhibitors against cholesterol ester transfer protein (CEPT). The biosynthesis initiates from condensation of acetate and malonate units catalyzed by the non-reducing PKS pks8/GME11356. Pks8/GME11356 lacks a thioesterase (TE) domain, which is important to the cyclizing of the third ring of atrochrysone carboxylic acid, and the esterase GME11355 might play the role of TE and catalyzes the cyclization reaction of the C ring. The lactamase-like protein GME11357 (or other beta-lactamases in Pestalotiopsis microspora) probably hydrolyzes the thioester bond between the ACP of pks8/GME11356 and the intermediate to release atrochrysone carboxylic acid, which is spontaneously dehydrates to form endocrocin anthrone. Endocrocin anthrone is further converted to emodin via the endocrocin intermediate. Emodin is then oxidized by several enzymes such as the Baeyer-Villiger oxidase GME11358, the oxidoreductase GME11367, the short chain dehydrogenase/reductase GME11373, as well as by other oxidoreductases from the cluster, to modify the A and C rings and open the B ring, and finally yield monodictyphenone. The prenyltransferase GME11375 may catalyze the addition reaction between the C5 side chains and the carbon bone of dibenzodioxocinones. The remaining biochemical reactions to the final product dibenzodioxocinones should be methylation catalyzed by methyltransferase GME11366 and reduction and lactonization reaction catalyzed by a series of oxidordeuctases. The polypeptide is Putative monooxygenase GME11364 (Pestalotiopsis microspora).